We begin with the raw amino-acid sequence, 488 residues long: Inosine-5'-monophosphate dehydrogenase (488 aa).

CBS domains follow at residues 95-153 and 157-214; these read VITN…SMKI and MTKE…PNSS. NAD(+) is bound by residues Asp-251 and 301-303; that span reads GIG. 2 residues coordinate K(+): Gly-303 and Gly-305. Ser-306 is a binding site for IMP. Cys-308 serves as a coordination point for K(+). Cys-308 (thioimidate intermediate) is an active-site residue. IMP is bound by residues 341 to 343, 364 to 365, and 388 to 392; these read DGG, GS, and YRGMG. Arg-404 functions as the Proton acceptor in the catalytic mechanism. Glu-416 is an IMP binding site. The K(+) site is built by Glu-470, Ser-471, and His-472.

This sequence belongs to the IMPDH/GMPR family. In terms of assembly, homotetramer. Requires K(+) as cofactor.

The enzyme catalyses IMP + NAD(+) + H2O = XMP + NADH + H(+). It participates in purine metabolism; XMP biosynthesis via de novo pathway; XMP from IMP: step 1/1. Mycophenolic acid (MPA) is a non-competitive inhibitor that prevents formation of the closed enzyme conformation by binding to the same site as the amobile flap. In contrast, mizoribine monophosphate (MZP) is a competitive inhibitor that induces the closed conformation. MPA is a potent inhibitor of mammalian IMPDHs but a poor inhibitor of the bacterial enzymes. MZP is a more potent inhibitor of bacterial IMPDH. Its function is as follows. Catalyzes the conversion of inosine 5'-phosphate (IMP) to xanthosine 5'-phosphate (XMP), the first committed and rate-limiting step in the de novo synthesis of guanine nucleotides, and therefore plays an important role in the regulation of cell growth. The sequence is that of Inosine-5'-monophosphate dehydrogenase from Bacillus subtilis (strain 168).